Reading from the N-terminus, the 255-residue chain is Alpha-acetolactate decarboxylase (255 aa).

The protein belongs to the alpha-acetolactate decarboxylase family.

The catalysed reaction is (2S)-2-acetolactate + H(+) = (R)-acetoin + CO2. It functions in the pathway polyol metabolism; (R,R)-butane-2,3-diol biosynthesis; (R,R)-butane-2,3-diol from pyruvate: step 2/3. Functionally, converts acetolactate into acetoin, which can be excreted by the cells. This may be a mechanism for controlling the internal pH of cells in the stationary stage. The polypeptide is Alpha-acetolactate decarboxylase (alsD) (Bacillus subtilis (strain 168)).